The sequence spans 190 residues: Putative glutathione-dependent formaldehyde-activating enzyme (190 aa).

The CENP-V/GFA domain maps to 19-165; it reads FKGGKLYCHC…FRKVGLQPYD (147 aa). Zn(2+)-binding residues include Cys-26, Cys-28, Cys-47, Cys-49, Cys-52, Cys-94, and Cys-97.

It belongs to the Gfa family. Zn(2+) serves as cofactor.

It carries out the reaction S-(hydroxymethyl)glutathione = glutathione + formaldehyde. Its pathway is one-carbon metabolism; formaldehyde degradation; formate from formaldehyde (glutathione route): step 1/3. In terms of biological role, catalyzes the condensation of formaldehyde and glutathione to S-hydroxymethylglutathione. In Pyrenophora teres f. teres (strain 0-1) (Barley net blotch fungus), this protein is Putative glutathione-dependent formaldehyde-activating enzyme.